The following is a 192-amino-acid chain: MVRAGAVGAHLPASGLDIFGDLKKMNKRQLYYQVLNFAMIVSSALMIWKGLIVLTGSESPIVVVLSGSMEPAFHRGDLLFLTNFREDPIRAGEIVVFKVEGRDIPIVHRVIKVHEKDNGDIKFLTKGDNNEVDDRGLYKEGQNWLEKKDVVGRARGFLPYVGMVTIIMNDYPKFKYALLAVMGAYVLLKRES.

Over 1–28 the chain is Cytoplasmic; it reads MVRAGAVGAHLPASGLDIFGDLKKMNKR. A helical; Signal-anchor for type II membrane protein membrane pass occupies residues 29-48; the sequence is QLYYQVLNFAMIVSSALMIW. Over 49–192 the chain is Lumenal; that stretch reads KGLIVLTGSE…GAYVLLKRES (144 aa). Active-site charge relay system residues include Ser68, His108, and Asp134. The tract at residues 177–188 is C-terminal short (CTS) helix; sequence ALLAVMGAYVLL.

Belongs to the peptidase S26B family. Component of the signal peptidase complex paralog C (SPC-C) composed of a catalytic subunit SEC11C and three accessory subunits SPCS1, SPCS2 and SPCS3. Within the complex, interacts with SPCS2 and SPCS3. The complex induces a local thinning of the ER membrane which is used to measure the length of the signal peptide (SP) h-region of protein substrates. This ensures the selectivity of the complex towards h-regions shorter than 18-20 amino acids. May undergo processing at the N-terminus.

It localises to the endoplasmic reticulum membrane. It carries out the reaction Cleavage of hydrophobic, N-terminal signal or leader sequences from secreted and periplasmic proteins.. Its function is as follows. Catalytic component of the signal peptidase complex (SPC) which catalyzes the cleavage of N-terminal signal sequences from nascent proteins as they are translocated into the lumen of the endoplasmic reticulum. Specifically cleaves N-terminal signal peptides that contain a hydrophobic alpha-helix (h-region) shorter than 18-20 amino acids. The polypeptide is Signal peptidase complex catalytic subunit SEC11C (SEC11C) (Homo sapiens (Human)).